Consider the following 134-residue polypeptide: MGFKRFVEIGRVALVNYGEDYGKLVVIVDVVDQNRALVDAPDMERIQMNLKRLSLTDIVIDINRVPKKKVLIEAMEKADVKNKWEKSSWGRKLIVQKRRAALNDFDRFKIMLAKIKRAGIVRQELAKLKREIAA.

The protein belongs to the eukaryotic ribosomal protein eL14 family.

This Arabidopsis thaliana (Mouse-ear cress) protein is Large ribosomal subunit protein eL14z (RPL14A).